The sequence spans 508 residues: Abl interactor 1 (508 aa).

The residue at position 2 (A2) is an N-acetylalanine. The interval 18–79 (ALIESYQNLT…NNVLQLLDIQ (62 aa)) is required for binding to WASF1. A t-SNARE coiled-coil homology domain is found at 45 to 107 (KALEETKAYT…DIHKEKVARR (63 aa)). A Phosphotyrosine modification is found at Y53. 3 disordered regions span residues 159-290 (KHGN…APPL), 306-375 (APGS…LTPQ), and 388-421 (NIAD…PVDY). Polar residues predominate over residues 161 to 175 (GNNQPARTGTLSRTN). Residues T174 and T178 each carry the phosphothreonine modification. A phosphoserine mark is found at S183 and S187. The residue at position 213 (Y213) is a Phosphotyrosine; by ABL1. The residue at position 215 (T215) is a Phosphothreonine. S216, S222, and S225 each carry phosphoserine. The segment covering 222 to 235 (SQHSPGRTASLNQR) has biased composition (polar residues). Positions 248–258 (SRENSGSSSIG) are enriched in low complexity. Over residues 278 to 290 (VPPPSGAPPAPPL) the composition is skewed to pro residues. A compositionally biased stretch (polar residues) spans 307–322 (PGSQYGTMTRQISRHN). S319 and S323 each carry phosphoserine. Over residues 337–347 (PSVTAQFSAQP) the composition is skewed to polar residues. 2 stretches are compositionally biased toward pro residues: residues 393–403 (PTPPPPPPPDD) and 410–419 (SPPPPPPPPV). The SH3 domain maps to 446–505 (NYIEKVVAIYDYTKDKDDELSFMEGAIIYVIKKNDDGWYEGVCNRVTGLFPGNYVESIMH). At Y455 the chain carries Phosphotyrosine. Phosphoserine is present on S466. T507 carries the phosphothreonine modification.

This sequence belongs to the ABI family. As to quaternary structure, interacts with ABL1, ENAH, STX1A, SNAP25, VAMP2, EPS8, and through its N-terminus with WASF1. Part of a complex consisting of ABI1, STX1A and SNAP25. Part of a complex consisting of ABI1, EPS8 and SOS1. Interacts with SOS1, SOS2, GRB2, SPTA1 and the first SH3 domain of NCK1. Isoform 6 does not interact with NCK1. Component of the WAVE2 complex composed of ABI1, CYFIP1/SRA1, NCKAP1/NAP1 (NCKAP1l/HEM1 in hematopoietic cells) and WASF2/WAVE2. Interacts (via SH3 domain) with SHANK2 and SHANK3, but not SHANK1; the interaction is direct. Interacts with the heterodimer MYC:MAX; the interaction may enhance MYC:MAX transcriptional activity. Interacts with FNBP1L (via the SH3 domain), WASF2, and CDC42, but only in the presence of FNBP1L. In terms of assembly, (Microbial infection) Interacts with human cytomegalovirus/HHV-5 protein UL135. Post-translationally, phosphorylated on tyrosine residues after serum stimulation or induction by v-Abl. Seems to be phosphorylated at Tyr-53 by ABL1, required for nuclear but not for synaptic localization. Widely expressed, with highest expression in brain.

Its subcellular location is the cytoplasm. The protein resides in the nucleus. It is found in the cell projection. It localises to the lamellipodium. The protein localises to the filopodium. Its subcellular location is the growth cone. The protein resides in the postsynaptic density. It is found in the cytoskeleton. Its function is as follows. May act in negative regulation of cell growth and transformation by interacting with nonreceptor tyrosine kinases ABL1 and/or ABL2. May play a role in regulation of EGF-induced Erk pathway activation. Involved in cytoskeletal reorganization and EGFR signaling. Together with EPS8 participates in transduction of signals from Ras to Rac. In vitro, a trimeric complex of ABI1, EPS8 and SOS1 exhibits Rac specific guanine nucleotide exchange factor (GEF) activity and ABI1 seems to act as an adapter in the complex. Regulates ABL1/c-Abl-mediated phosphorylation of ENAH. Recruits WASF1 to lamellipodia and there seems to regulate WASF1 protein level. In brain, seems to regulate the dendritic outgrowth and branching as well as to determine the shape and number of synaptic contacts of developing neurons. The protein is Abl interactor 1 of Homo sapiens (Human).